Consider the following 93-residue polypeptide: Protein S100-A5 (93 aa).

EF-hand domains lie at 12-47 (MVTTFHKYSGREGSKLTLSRKELKELIKTELSLAEK) and 48-83 (MKESSIDNLMKSLDKNSDQEIDFKEYSVFLTTLCMA). T28, E33, D61, N63, D65, E67, and E72 together coordinate Ca(2+).

The protein belongs to the S-100 family. In terms of assembly, homodimer.

Binds calcium, zinc and copper. One subunit can simultaneously bind 2 calcium ions or 2 copper ions plus 1 zinc ion. Calcium and copper ions compete for the same binding sites. The chain is Protein S100-A5 (S100a5) from Mus musculus (Mouse).